The chain runs to 296 residues: 4-hydroxybenzoate octaprenyltransferase (296 aa).

The next 8 helical transmembrane spans lie at 29-49, 52-72, 103-123, 151-171, 176-196, 220-240, 243-263, and 275-295; these read AGWL…AGGF, WHLL…GCCI, LVLG…TNAI, VLGV…LGEV, WLLM…YAMV, VILL…MPYV, ALFT…YTLI, and FRLN…SYAL.

Belongs to the UbiA prenyltransferase family. Requires Mg(2+) as cofactor.

Its subcellular location is the cell inner membrane. The enzyme catalyses all-trans-octaprenyl diphosphate + 4-hydroxybenzoate = 4-hydroxy-3-(all-trans-octaprenyl)benzoate + diphosphate. It functions in the pathway cofactor biosynthesis; ubiquinone biosynthesis. In terms of biological role, catalyzes the prenylation of para-hydroxybenzoate (PHB) with an all-trans polyprenyl group. Mediates the second step in the final reaction sequence of ubiquinone-8 (UQ-8) biosynthesis, which is the condensation of the polyisoprenoid side chain with PHB, generating the first membrane-bound Q intermediate 3-octaprenyl-4-hydroxybenzoate. This Albidiferax ferrireducens (strain ATCC BAA-621 / DSM 15236 / T118) (Rhodoferax ferrireducens) protein is 4-hydroxybenzoate octaprenyltransferase.